The chain runs to 585 residues: BURP domain-containing protein 17 (585 aa).

Positions 1–20 (MDRIFARFFCFLLIAAVSHA) are cleaved as a signal peptide. The tract at residues 63–82 (GQRNYKSSVSHVAERSHRVD) is disordered. The BURP domain occupies 363 to 584 (FFLEKNLQQG…QPDAVVWTRR (222 aa)).

Expressed in leaves.

This is BURP domain-containing protein 17 (BURP17) from Oryza sativa subsp. japonica (Rice).